The primary structure comprises 85 residues: Large ribosomal subunit protein uL23 (85 aa).

Belongs to the universal ribosomal protein uL23 family. As to quaternary structure, part of the 50S ribosomal subunit. Interacts with protein L29 and weakly with protein L39e.

Binds to a specific region on the 23S rRNA. Located at the polypeptide exit tunnel on the outside of the subunit. The sequence is that of Large ribosomal subunit protein uL23 from Haloarcula marismortui (strain ATCC 43049 / DSM 3752 / JCM 8966 / VKM B-1809) (Halobacterium marismortui).